We begin with the raw amino-acid sequence, 152 residues long: Small ribosomal subunit protein uS13 (152 aa).

The protein belongs to the universal ribosomal protein uS13 family. As to quaternary structure, part of the 30S ribosomal subunit. Forms a loose heterodimer with protein S19. Forms two bridges to the 50S subunit in the 70S ribosome.

Its function is as follows. Located at the top of the head of the 30S subunit, it contacts several helices of the 16S rRNA. In the 70S ribosome it contacts the 23S rRNA (bridge B1a) and protein L5 of the 50S subunit (bridge B1b), connecting the 2 subunits; these bridges are implicated in subunit movement. This chain is Small ribosomal subunit protein uS13, found in Pyrobaculum arsenaticum (strain DSM 13514 / JCM 11321 / PZ6).